We begin with the raw amino-acid sequence, 603 residues long: Phosphogluconate dehydratase (603 aa).

[4Fe-4S] cluster contacts are provided by Cys154 and Cys221.

It belongs to the IlvD/Edd family. The cofactor is [4Fe-4S] cluster.

It carries out the reaction 6-phospho-D-gluconate = 2-dehydro-3-deoxy-6-phospho-D-gluconate + H2O. Its pathway is carbohydrate metabolism; Entner-Doudoroff pathway. Functionally, catalyzes the dehydration of 6-phospho-D-gluconate to 2-dehydro-3-deoxy-6-phospho-D-gluconate. The sequence is that of Phosphogluconate dehydratase from Escherichia coli O157:H7.